A 154-amino-acid chain; its full sequence is Large ribosomal subunit protein uL13 (154 aa).

Belongs to the universal ribosomal protein uL13 family. Part of the 50S ribosomal subunit.

In terms of biological role, this protein is one of the early assembly proteins of the 50S ribosomal subunit, although it is not seen to bind rRNA by itself. It is important during the early stages of 50S assembly. The polypeptide is Large ribosomal subunit protein uL13 (Bartonella tribocorum (strain CIP 105476 / IBS 506)).